We begin with the raw amino-acid sequence, 262 residues long: 3-deoxy-manno-octulosonate cytidylyltransferase (262 aa).

Belongs to the KdsB family.

It localises to the cytoplasm. It catalyses the reaction 3-deoxy-alpha-D-manno-oct-2-ulosonate + CTP = CMP-3-deoxy-beta-D-manno-octulosonate + diphosphate. It participates in nucleotide-sugar biosynthesis; CMP-3-deoxy-D-manno-octulosonate biosynthesis; CMP-3-deoxy-D-manno-octulosonate from 3-deoxy-D-manno-octulosonate and CTP: step 1/1. Its pathway is bacterial outer membrane biogenesis; lipopolysaccharide biosynthesis. Activates KDO (a required 8-carbon sugar) for incorporation into bacterial lipopolysaccharide in Gram-negative bacteria. The sequence is that of 3-deoxy-manno-octulosonate cytidylyltransferase from Acidovorax ebreus (strain TPSY) (Diaphorobacter sp. (strain TPSY)).